Consider the following 76-residue polypeptide: Acyl carrier protein (76 aa).

In terms of domain architecture, Carrier spans 1-75 (MIFEKIKDLI…DIVFYITKNT (75 aa)). Position 35 is an O-(pantetheine 4'-phosphoryl)serine (Ser35).

Belongs to the acyl carrier protein (ACP) family. In terms of processing, 4'-phosphopantetheine is transferred from CoA to a specific serine of apo-ACP by AcpS. This modification is essential for activity because fatty acids are bound in thioester linkage to the sulfhydryl of the prosthetic group.

Its subcellular location is the cytoplasm. Its pathway is lipid metabolism; fatty acid biosynthesis. Functionally, carrier of the growing fatty acid chain in fatty acid biosynthesis. The sequence is that of Acyl carrier protein from Aster yellows witches'-broom phytoplasma (strain AYWB).